Reading from the N-terminus, the 417-residue chain is Prostaglandin E2 receptor EP3 subtype (417 aa).

At 1-52 (MKATRDHASAPFCTRFNHSDPGIWAAERAVEAPNNLTLPPEPSEDCGSVSVA) the chain is on the extracellular side. N17 and N35 each carry an N-linked (GlcNAc...) asparagine glycan. A helical transmembrane segment spans residues 53–77 (FSMTMMITGFVGNALAITLVSKSYR). The Cytoplasmic segment spans residues 78–90 (RREGKRKKSFLLC). Residues 91–111 (IGWLALTDMVGQLLTSPVVIV) traverse the membrane as a helical segment. Topologically, residues 112–130 (LYLSHQRWEQLDPSGRLCT) are extracellular. Residues 131–152 (FFGLTMTVFGLSSLFIASAMAV) traverse the membrane as a helical segment. Residues 153–174 (ERALATRAPHWYSSHMKTSVTR) lie on the Cytoplasmic side of the membrane. Residues 175-196 (AVLLGVWLAVLAFALLPVLGVG) traverse the membrane as a helical segment. Topologically, residues 197–226 (QYTIQWPGTWCFISTGPGGNGTNSRQNWGN) are extracellular. Residue N216 is glycosylated (N-linked (GlcNAc...) asparagine). Residues 227–252 (VFFASAFAILGLSALVVTFACNLATI) traverse the membrane as a helical segment. Residues 253 to 282 (KALVSRCRAKATASQSSAQWGRITTETAIQ) lie on the Cytoplasmic side of the membrane. Residues 283 to 306 (LMGIMCVLSVCWSPLLIMMLKMIF) traverse the membrane as a helical segment. N-linked (GlcNAc...) asparagine glycosylation is present at N307. The Extracellular segment spans residues 307–326 (NHTSVEHCKTYTENQDECNF). The helical transmembrane segment at 327 to 348 (FLIAVRLASLNQILDPWVYLLL) threads the bilayer. Over 349-417 (RKILLQKFCQ…HIYLHTLEHQ (69 aa)) the chain is Cytoplasmic.

The protein belongs to the G-protein coupled receptor 1 family. In terms of assembly, interacts (via C-terminus) with MKLN1.

Its subcellular location is the cell membrane. In terms of biological role, receptor for prostaglandin E2 (PGE2). The various isoforms have identical ligand binding properties but interact with different second messenger systems: isoform EP3A couples to G(i)/G(o) proteins; isoform EP3B and isoform EP3C couple to G(s), and isoform EP3D couples to G(i), G(s) and G(p). Required for normal development of fever in response to pyrinogens, including IL1B, prostaglandin E2 and bacterial lipopolysaccharide (LPS). Required for normal potentiation of platelet aggregation by prostaglandin E2, and thus plays a role in the regulation of blood coagulation. Required for increased HCO3(-) secretion in the duodenum in response to mucosal acidification, and thereby contributes to the protection of the mucosa against acid-induced ulceration. Not required for normal kidney function, normal urine volume and osmolality. The protein is Prostaglandin E2 receptor EP3 subtype (PTGER3) of Bos taurus (Bovine).